A 64-amino-acid polypeptide reads, in one-letter code: SPbeta prophage-derived uncharacterized protein YoqI (64 aa).

This Bacillus subtilis (strain 168) protein is SPbeta prophage-derived uncharacterized protein YoqI (yoqI).